A 562-amino-acid chain; its full sequence is Eukaryotic translation initiation factor 3 subunit L (562 aa).

The disordered stretch occupies residues 1–29 (MSHAKEDYDSSYDPYSYQADYDGHTGDPK). Over residues 11–20 (SYDPYSYQAD) the composition is skewed to low complexity. Positions 329 to 535 (DSIRVFANIL…IHIADTKVAR (207 aa)) constitute a PCI domain.

The protein belongs to the eIF-3 subunit L family. As to quaternary structure, component of the eukaryotic translation initiation factor 3 (eIF-3) complex, which is composed of 13 subunits: eif3a, eif3b, eif3c, eif3d, eif3e, eif3f, eif3g, eif3h, eif3i, eif3j, eif3k, eif3l and eif3m.

Its subcellular location is the cytoplasm. Component of the eukaryotic translation initiation factor 3 (eIF-3) complex, which is involved in protein synthesis of a specialized repertoire of mRNAs and, together with other initiation factors, stimulates binding of mRNA and methionyl-tRNAi to the 40S ribosome. The eIF-3 complex specifically targets and initiates translation of a subset of mRNAs involved in cell proliferation. This Xenopus laevis (African clawed frog) protein is Eukaryotic translation initiation factor 3 subunit L (eif3l).